The chain runs to 231 residues: Uracil-DNA glycosylase (231 aa).

The Proton acceptor role is filled by Asp70.

This sequence belongs to the uracil-DNA glycosylase (UDG) superfamily. UNG family.

It localises to the cytoplasm. It catalyses the reaction Hydrolyzes single-stranded DNA or mismatched double-stranded DNA and polynucleotides, releasing free uracil.. In terms of biological role, excises uracil residues from the DNA which can arise as a result of misincorporation of dUMP residues by DNA polymerase or due to deamination of cytosine. This is Uracil-DNA glycosylase from Campylobacter curvus (strain 525.92).